A 31-amino-acid chain; its full sequence is Cyclotide cter-R (31 aa).

The cyclopeptide (Gly-Asn) cross-link spans 1–31 (GIPCGESCVFIPCTVTALLGCSCKDKVCYKN). 3 disulfides stabilise this stretch: C4–C21, C8–C23, and C13–C28.

Post-translationally, this is a cyclic peptide.

It is found in the secreted. Its function is as follows. Probably participates in a plant defense mechanism. The sequence is that of Cyclotide cter-R from Clitoria ternatea (Butterfly pea).